Reading from the N-terminus, the 332-residue chain is F-box/SPRY domain-containing protein 1 (332 aa).

A compositionally biased stretch (acidic residues) spans 1 to 10; sequence MTENNEETIV. The interval 1–81 is disordered; the sequence is MTENNEETIV…RRSPRRPEVS (81 aa). Positions 15–24 are enriched in polar residues; it reads CNLTSSTPMK. The 49-residue stretch at 79 to 127 folds into the F-box domain; that stretch reads EVSASRLPLKVLNQIFQYLSLKDLRSAMLTCHSWNNALSMEDSDIWQQL. The B30.2/SPRY domain occupies 138-330; that stretch reads SDPFLFVELR…VTMVYVGSPQ (193 aa).

The protein belongs to the FBXO45/Fsn family. Component of an SCF (SKP1-CUL1-F-box protein) E3 ubiquitin ligase complex composed of cul-1, fsn-1, rpm-1 and skr-1. Interacts (via SPRY domain) with scd-2 (via cytoplasmic domain). Interacts (via SPRY domain) with convertase egl-3 (via C-terminus).

Its subcellular location is the synapse. It functions in the pathway protein modification; protein ubiquitination. Component of a SCF (SKP1-CUL1-F-box protein) E3 ubiquitin ligase complex which is required for the restriction and/or maturation of synapses in GABAergic neuromuscular junction (NMJ) presynaptic neurons. Promotes NRJ synapse development and synaptic transmission by negatively regulating the daf-2/InsR pathway in muscles. By targeting convertase egl-3 for degradation, negatively modulates insulin-like protein ins-4 and ins-6 processing. May stabilize synapse formation by promoting the down-regulation of scd-2. Regulates axon termination in PLM and ALM neurons. In Caenorhabditis briggsae, this protein is F-box/SPRY domain-containing protein 1 (fsn-1).